We begin with the raw amino-acid sequence, 217 residues long: Lipid A acyltransferase PagP (217 aa).

Positions 1–24 are cleaved as a signal peptide; it reads MYLKRILITLSLITLPIVPCLSYA. Residues histidine 89, aspartate 132, and serine 133 contribute to the active site.

The protein belongs to the lipid A palmitoyltransferase family. As to quaternary structure, homodimer.

Its subcellular location is the cell outer membrane. The enzyme catalyses a lipid A + a 1,2-diacyl-sn-glycero-3-phosphocholine = a hepta-acyl lipid A + a 2-acyl-sn-glycero-3-phosphocholine. The catalysed reaction is a lipid IVA + a 1,2-diacyl-sn-glycero-3-phosphocholine = a lipid IVB + a 2-acyl-sn-glycero-3-phosphocholine. It catalyses the reaction a lipid IIA + a 1,2-diacyl-sn-glycero-3-phosphocholine = a lipid IIB + a 2-acyl-sn-glycero-3-phosphocholine. In terms of biological role, transfers a fatty acid residue from the sn-1 position of a phospholipid to the N-linked hydroxyfatty acid chain on the proximal unit of lipid A or its precursors. This Pectobacterium atrosepticum (strain SCRI 1043 / ATCC BAA-672) (Erwinia carotovora subsp. atroseptica) protein is Lipid A acyltransferase PagP.